Here is a 125-residue protein sequence, read N- to C-terminus: Cyclic diguanosine monophosphate-binding protein PA4608 (125 aa).

6–13 (DERRRFHR) provides a ligand contact to 3',3'-c-di-GMP. In terms of domain architecture, PilZ spans 7–103 (ERRRFHRIAF…SISHLRRLVE (97 aa)). The short motif at 9-13 (RRFHR) is the RXXXR motif; surrounds the surface of the c-di-GMP binding site element. A DXSXXG motif; surrounds the surface of the c-di-GMP binding site motif is present at residues 35 to 40 (DVSLHG). Trp-77 contributes to the 3',3'-c-di-GMP binding site.

In terms of assembly, monomer in both c-di-GMP-bound and free forms.

Binds the second messenger bis-(3'-5') cyclic dimeric guanosine monophosphate (c-di-GMP). Can bind two c-di-GMP molecules per monomer. May play a role in bacterial second-messenger regulated processes. Binding to c-di-GMP induces a conformational change of the C- and N-termini resulting in the exposure of a highly negative surface on one side of the protein to a possible effector protein. The sequence is that of Cyclic diguanosine monophosphate-binding protein PA4608 from Pseudomonas aeruginosa (strain ATCC 15692 / DSM 22644 / CIP 104116 / JCM 14847 / LMG 12228 / 1C / PRS 101 / PAO1).